A 211-amino-acid polypeptide reads, in one-letter code: Glycerol-3-phosphate acyltransferase (211 aa).

Helical transmembrane passes span 8–28 (YCLA…LILT), 84–104 (LALP…WLGF), 116–136 (VLLA…FAVA), 145–165 (AALC…GMGL), and 170–190 (LAQS…LVFL).

This sequence belongs to the PlsY family. Probably interacts with PlsX.

It is found in the cell inner membrane. The catalysed reaction is an acyl phosphate + sn-glycerol 3-phosphate = a 1-acyl-sn-glycero-3-phosphate + phosphate. The protein operates within lipid metabolism; phospholipid metabolism. Its function is as follows. Catalyzes the transfer of an acyl group from acyl-phosphate (acyl-PO(4)) to glycerol-3-phosphate (G3P) to form lysophosphatidic acid (LPA). This enzyme utilizes acyl-phosphate as fatty acyl donor, but not acyl-CoA or acyl-ACP. The chain is Glycerol-3-phosphate acyltransferase from Granulibacter bethesdensis (strain ATCC BAA-1260 / CGDNIH1).